Consider the following 1103-residue polypeptide: Kinesin-like protein KIF1C (1103 aa).

A Kinesin motor domain is found at 5-348; the sequence is SVKVAVRVRP…LRYADRTKQI (344 aa). 97–104 contributes to the ATP binding site; that stretch reads GQTGAGKS. Position 295 is a phosphoserine (serine 295). 2 coiled-coil regions span residues 359–388 and 438–479; these read NARL…SALE and EEAM…LAEM. Residues 400 to 438 form a disordered region; the sequence is ALPAVSSPPAPVSPSSPTTHNGELEPSFSPNTESQIGPE. Serine 494 carries the phosphoserine modification. Positions 523 to 590 constitute an FHA domain; that stretch reads TRVGQVDMDI…LKSGNRIVMG (68 aa). Positions 633–674 form a coiled coil; sequence EQQGIDIKLEMEKRLQDLENQYRKEKEEADLLLEQQRLYADS. 2 positions are modified to phosphoserine: serine 674 and serine 676. Disordered stretches follow at residues 808–828, 874–924, and 950–1103; these read GEEE…ARGA, LAQD…WERV, and QGLQ…GAAV. Gly residues predominate over residues 813-822; it reads GGAGSGGGSE. The stretch at 828–872 forms a coiled coil; it reads AEVEDLRAHIDKLTGILQEVKLQNSSKDRELQALRDRMLRMERVI. Positions 893 to 910 are enriched in low complexity; it reads PEGSEAAEEAAPSDRMPS. At serine 915 the chain carries Phosphoserine. Residues 953 to 962 show a composition bias toward gly residues; sequence QGSGGRGGGL. Positions 1021 to 1031 are enriched in basic residues; that stretch reads PSPRRSHHPRR. Serine 1033 bears the Phosphoserine mark. Position 1041 is an omega-N-methylarginine (arginine 1041). Over residues 1062-1083 the composition is skewed to pro residues; the sequence is PQPPQPYPAQRPPGPRYPPYTT. A Phosphothreonine modification is found at threonine 1083. Residue serine 1092 is modified to Phosphoserine. The segment covering 1092-1103 has biased composition (basic and acidic residues); that stretch reads SAPDLKESGAAV.

It belongs to the TRAFAC class myosin-kinesin ATPase superfamily. Kinesin family. Unc-104 subfamily. In terms of assembly, monomer. Interacts with BICD2. Phosphorylated on tyrosine residues. As to expression, expressed in all tissues examined, with most abundant expression in heart and skeletal muscle.

It localises to the cytoplasm. Its subcellular location is the cytoskeleton. Motor required for the retrograde transport of Golgi vesicles to the endoplasmic reticulum. Has a microtubule plus end-directed motility. In Homo sapiens (Human), this protein is Kinesin-like protein KIF1C (KIF1C).